The sequence spans 297 residues: Molybdate/tungstate import ATP-binding protein WtpC (297 aa).

The ABC transporter domain maps to 2–226 (LKVNNLSKIW…PKNKKVAEFL (225 aa)). 32-39 (GPSGAGKS) is an ATP binding site.

It belongs to the ABC transporter superfamily. Sulfate/tungstate importer (TC 3.A.1.6) family. In terms of assembly, the complex is composed of two ATP-binding proteins (WtpC), two transmembrane proteins (WtpB) and a solute-binding protein (WtpA).

It localises to the cell membrane. It catalyses the reaction tungstate(in) + ATP + H2O = tungstate(out) + ADP + phosphate + H(+). Functionally, part of the ABC transporter complex WtpABC involved in molybdate/tungstate import. Responsible for energy coupling to the transport system. The chain is Molybdate/tungstate import ATP-binding protein WtpC (wtpC) from Methanocaldococcus jannaschii (strain ATCC 43067 / DSM 2661 / JAL-1 / JCM 10045 / NBRC 100440) (Methanococcus jannaschii).